A 323-amino-acid chain; its full sequence is UPF0612 protein C569.01c (323 aa).

Coiled coils occupy residues 27-63 (IKRY…MKYE) and 131-225 (NEMN…DARS).

This sequence belongs to the UPF0612 family.

This is UPF0612 protein C569.01c from Schizosaccharomyces pombe (strain 972 / ATCC 24843) (Fission yeast).